Reading from the N-terminus, the 939-residue chain is MAPVRGDGMRGLAVFISDIRNCKSKEAEVKRINKELANIRSKFKGDKTLDGYQKKKYVCKLLFIFLLGHDIDFGHMEAVNLLSSNKYSEKQIGYLFISVLVNTNSDLIRLIIQSIKNDLQSRNPVHVNLALQCIANIGSRDMAESFSNEIPKLLVSGDTMDVVKQSAALCLLRLFRSSPDIIPGGEWTSRIIHLLNDQHMGVVTAATSLIDALVKCNPDEYKGCVNLAVSRLSRIVTASYTDLQDYTYYFVPAPWLSVKLLRLLQNYNPVTEEAGVRARLNETLETILNKAQEPPKSKKVQHSNAKNAVLFEAINLIIHSDSEPNLLVRACNQLGQFLSNRETNLRYLALESMCHLATSEFSHEEVKKHQEVVILSMKMEKDVSVRQMAVDLLYAMCDRGNAEEIVQEMLNYLETADYSIREEMVLKVAILAEKYATDYTWYVDVILNLIRIAGDYVSEEVWYRVIQIVINREEVQGYAAKTVFEALQAPACHENMVKVGGYILGEFGNLIAGDSRSAPLVQFKLLHSKYHLCSPMTRALLLSTYIKFINLFPEIRTNIQDVFRQHSNLRSADAELQQRASEYLQLSIVASTDVLATVLEEMPSFPERESSILAVLKKKKPGRVPENEIRESKSPAPTSGPGSVLQNNVHVNNSHSKLNNSNANTDLLGLSTPPANNVGSNSNSTLIDVLGDIYGSNNNSSAVYNTKKFLFKNNGVLFENEMLQIGVKSEFRQNLGRLGLFYGNKTQVPLSNFNPVLQWSAEETLKLNVQMKAVEPTLEAGAQIQQLLTAECIEDYADAPTIEISFRYNGTQQKFSIKLPLSVNKFFEPTEMNAESFFARWKNLSGEQQRSQKVFKAAQPLDLPGARNKLMGFGMQLLDSVDPNPDNMVCAGIIHTQSQQVGCLMRLEPNKQAQMFRLTVRASKETVTREICDLLADQF.

The span at 623–633 shows a compositional bias: basic and acidic residues; it reads RVPENEIRESK. A disordered region spans residues 623–660; the sequence is RVPENEIRESKSPAPTSGPGSVLQNNVHVNNSHSKLNN. Positions 635 to 660 are enriched in polar residues; it reads PAPTSGPGSVLQNNVHVNNSHSKLNN.

It belongs to the adapter complexes large subunit family. Adaptor protein complex 2 (AP-2) is a heterotetramer composed of two large adaptins (alpha-type and beta-type subunits), a medium adaptin (mu-type subunit AP50) and a small adaptin (sigma-type subunit AP17).

The protein localises to the cell membrane. It is found in the membrane. The protein resides in the coated pit. In terms of biological role, adaptins are components of the adapter complexes which link clathrin to receptors in coated vesicles. Clathrin-associated protein complexes are believed to interact with the cytoplasmic tails of membrane proteins, leading to their selection and concentration. Alpha adaptin is a subunit of the plasma membrane adapter. This chain is AP-2 complex subunit alpha, found in Drosophila pseudoobscura pseudoobscura (Fruit fly).